Reading from the N-terminus, the 369-residue chain is Phosphoribosyl pyrophosphate synthase-associated protein 2 (369 aa).

Position 1 is an N-acetylmethionine (M1). T5 carries the post-translational modification Phosphothreonine. Phosphoserine is present on residues S219, S227, and S233.

Belongs to the ribose-phosphate pyrophosphokinase family. As to quaternary structure, binds to PRPS1 and PRPS2.

In terms of biological role, seems to play a negative regulatory role in 5-phosphoribose 1-diphosphate synthesis. The polypeptide is Phosphoribosyl pyrophosphate synthase-associated protein 2 (PRPSAP2) (Pongo abelii (Sumatran orangutan)).